Reading from the N-terminus, the 547-residue chain is Apolipoprotein N-acyltransferase (547 aa).

The next 5 helical transmembrane spans lie at 31 to 51, 71 to 91, 106 to 126, 180 to 200, and 210 to 230; these read ILSG…ALIF, FWAG…WIAY, LALL…VAAG, LVGF…MGYV, and ALSH…WGFW. In terms of domain architecture, CN hydrolase spans 247 to 515; that stretch reads VQANIGNLEK…KYLKNAPLTF (269 aa). Glu294 (proton acceptor) is an active-site residue. The active site involves Lys364. The Nucleophile role is filled by Cys418. A helical transmembrane segment spans residues 515-535; it reads FFVQWGHWDWIVILLVLGAVI.

Belongs to the CN hydrolase family. Apolipoprotein N-acyltransferase subfamily.

The protein resides in the cell inner membrane. It carries out the reaction N-terminal S-1,2-diacyl-sn-glyceryl-L-cysteinyl-[lipoprotein] + a glycerophospholipid = N-acyl-S-1,2-diacyl-sn-glyceryl-L-cysteinyl-[lipoprotein] + a 2-acyl-sn-glycero-3-phospholipid + H(+). Its pathway is protein modification; lipoprotein biosynthesis (N-acyl transfer). Its function is as follows. Catalyzes the phospholipid dependent N-acylation of the N-terminal cysteine of apolipoprotein, the last step in lipoprotein maturation. The sequence is that of Apolipoprotein N-acyltransferase from Bdellovibrio bacteriovorus (strain ATCC 15356 / DSM 50701 / NCIMB 9529 / HD100).